A 41-amino-acid chain; its full sequence is Large ribosomal subunit protein bL36 (41 aa).

This sequence belongs to the bacterial ribosomal protein bL36 family.

This chain is Large ribosomal subunit protein bL36, found in Gluconobacter oxydans (strain 621H) (Gluconobacter suboxydans).